Consider the following 296-residue polypeptide: NAD kinase (296 aa).

Residue aspartate 78 is the Proton acceptor of the active site. Residues 78 to 79 (DG), 152 to 153 (ND), arginine 180, aspartate 182, and glutamine 251 contribute to the NAD(+) site.

It belongs to the NAD kinase family. It depends on a divalent metal cation as a cofactor.

The protein localises to the cytoplasm. The enzyme catalyses NAD(+) + ATP = ADP + NADP(+) + H(+). In terms of biological role, involved in the regulation of the intracellular balance of NAD and NADP, and is a key enzyme in the biosynthesis of NADP. Catalyzes specifically the phosphorylation on 2'-hydroxyl of the adenosine moiety of NAD to yield NADP. The polypeptide is NAD kinase (Neisseria gonorrhoeae (strain ATCC 700825 / FA 1090)).